Here is a 385-residue protein sequence, read N- to C-terminus: Serine/threonine-protein kinase SBK1 (385 aa).

The Protein kinase domain maps to 32 to 297; sequence YEVIRELGKG…VFAHLGHRWM (266 aa). Residues 38–46 and lysine 61 contribute to the ATP site; that span reads LGKGTYGKV. Aspartate 153 (proton acceptor) is an active-site residue. Positions 328–338 are enriched in polar residues; that stretch reads TLSPTANTSNA. The interval 328 to 374 is disordered; the sequence is TLSPTANTSNAIEPGSANHFTSMSTNSSVSSTNSYERSARDSPPTSR. The span at 348–361 shows a compositional bias: low complexity; the sequence is TSMSTNSSVSSTNS.

This sequence belongs to the protein kinase superfamily. Ser/Thr protein kinase family. As to expression, mainly expressed in brain.

The protein localises to the cytoplasm. It catalyses the reaction L-seryl-[protein] + ATP = O-phospho-L-seryl-[protein] + ADP + H(+). The enzyme catalyses L-threonyl-[protein] + ATP = O-phospho-L-threonyl-[protein] + ADP + H(+). Its function is as follows. May be involved in the control of neuronal proliferation or migration in the brain of embryos. In Danio rerio (Zebrafish), this protein is Serine/threonine-protein kinase SBK1 (sbk1).